Reading from the N-terminus, the 364-residue chain is tRNA N6-adenosine threonylcarbamoyltransferase (364 aa).

Residues H115 and H119 each contribute to the Fe cation site. Substrate is bound by residues 137-141 (LVSGG), D170, G183, and N288. D316 contributes to the Fe cation binding site. The disordered stretch occupies residues 341 to 364 (PRSRWPLDEKSAPLIGTGRRGTKA).

It belongs to the KAE1 / TsaD family. The cofactor is Fe(2+).

Its subcellular location is the cytoplasm. It catalyses the reaction L-threonylcarbamoyladenylate + adenosine(37) in tRNA = N(6)-L-threonylcarbamoyladenosine(37) in tRNA + AMP + H(+). Functionally, required for the formation of a threonylcarbamoyl group on adenosine at position 37 (t(6)A37) in tRNAs that read codons beginning with adenine. Is involved in the transfer of the threonylcarbamoyl moiety of threonylcarbamoyl-AMP (TC-AMP) to the N6 group of A37, together with TsaE and TsaB. TsaD likely plays a direct catalytic role in this reaction. This Bartonella henselae (strain ATCC 49882 / DSM 28221 / CCUG 30454 / Houston 1) (Rochalimaea henselae) protein is tRNA N6-adenosine threonylcarbamoyltransferase.